Consider the following 391-residue polypeptide: Phosphoglycerate kinase (391 aa).

Residues 23 to 25, arginine 38, 61 to 64, arginine 117, and arginine 150 contribute to the substrate site; these read DFN and HLGK. ATP-binding positions include lysine 201, glycine 291, glutamate 322, and 348–351; that span reads GGDS.

It belongs to the phosphoglycerate kinase family. As to quaternary structure, monomer.

Its subcellular location is the cytoplasm. It carries out the reaction (2R)-3-phosphoglycerate + ATP = (2R)-3-phospho-glyceroyl phosphate + ADP. The protein operates within carbohydrate degradation; glycolysis; pyruvate from D-glyceraldehyde 3-phosphate: step 2/5. This chain is Phosphoglycerate kinase, found in Clostridium beijerinckii (strain ATCC 51743 / NCIMB 8052) (Clostridium acetobutylicum).